We begin with the raw amino-acid sequence, 159 residues long: Ribosomal RNA large subunit methyltransferase H (159 aa).

S-adenosyl-L-methionine contacts are provided by residues L76, G108, and F127 to L132.

This sequence belongs to the RNA methyltransferase RlmH family. As to quaternary structure, homodimer.

The protein resides in the cytoplasm. It catalyses the reaction pseudouridine(1915) in 23S rRNA + S-adenosyl-L-methionine = N(3)-methylpseudouridine(1915) in 23S rRNA + S-adenosyl-L-homocysteine + H(+). Functionally, specifically methylates the pseudouridine at position 1915 (m3Psi1915) in 23S rRNA. This is Ribosomal RNA large subunit methyltransferase H from Streptococcus gordonii (strain Challis / ATCC 35105 / BCRC 15272 / CH1 / DL1 / V288).